The chain runs to 398 residues: G2/mitotic-specific cyclin-B2 (398 aa).

A Phosphothreonine modification is found at threonine 8. Phosphoserine is present on residues serine 11, serine 77, and serine 92. At threonine 94 the chain carries Phosphothreonine. 3 positions are modified to phosphoserine: serine 99, serine 392, and serine 398.

This sequence belongs to the cyclin family. Cyclin AB subfamily. In terms of assembly, interacts with the CDK1 protein kinase to form a serine/threonine kinase holoenzyme complex also known as maturation promoting factor (MPF). The cyclin subunit imparts substrate specificity to the complex.

Its function is as follows. Essential for the control of the cell cycle at the G2/M (mitosis) transition. This is G2/mitotic-specific cyclin-B2 (CCNB2) from Macaca fascicularis (Crab-eating macaque).